The primary structure comprises 1494 residues: Serine/threonine-protein kinase VPS15 (1494 aa).

Residue G2 is the site of N-myristoyl glycine attachment. Residues 27–307 (LVLKEVLGRG…VFPNYFSPFL (281 aa)) form the Protein kinase domain. Residues 33–41 (LGRGRFLKS) and K54 each bind ATP. The active-site Proton acceptor is D149. 7 HEAT repeats span residues 383–421 (NSKD…LYDS), 480–517 (DRLQ…LVRD), 524–562 (KIFP…TAYG), 610–646 (KTIA…FFGQ), 648–685 (QSND…FVGQ), 687–724 (SVEE…SSFL), and 727–764 (RALL…CLGA). Disordered stretches follow at residues 859–903 (QSVE…TVEL) and 1037–1064 (SASV…SVPD). Low complexity predominate over residues 1037 to 1047 (SASVTSEDASS). WD repeat units follow at residues 1079–1118 (EHRS…KDIS), 1127–1166 (LEGS…RGLG), 1184–1226 (KEGA…DAWT), 1231–1270 (PEEG…PVNS), 1276–1323 (ICPI…CHQV), 1371–1409 (PRLP…RSYC), and 1466–1494 (DSVQ…KVWK).

It belongs to the protein kinase superfamily. Ser/Thr protein kinase family. In terms of assembly, interacts with VPS34. Component of a complex made of VPS38/USL1 and PI3K main subunits such as VPS15, ATG6/VPS30 and VPS34. Autophosphorylated. In terms of tissue distribution, mainly expressed in anthers, pollen grains and pollen tubes, and, to a lower extent, in other tissues and organs including seedlings, roots, stems, leaves, flowers, pitils and siliques.

The protein resides in the cytoplasm. It localises to the golgi apparatus. The protein localises to the trans-Golgi network membrane. Its subcellular location is the endosome membrane. The catalysed reaction is L-seryl-[protein] + ATP = O-phospho-L-seryl-[protein] + ADP + H(+). It catalyses the reaction L-threonyl-[protein] + ATP = O-phospho-L-threonyl-[protein] + ADP + H(+). Serine/threonine-protein kinase required for cytoplasm to vacuole transport (Cvt) and autophagy as a part of the autophagy-specific VPS34 PI3-kinase complex I. Required for pollen development and germination, probably via the modulation of phosphatidylinositol 3-phosphate (PI3P) formation and vacuolar organization. The chain is Serine/threonine-protein kinase VPS15 from Arabidopsis thaliana (Mouse-ear cress).